Reading from the N-terminus, the 228-residue chain is Ribosomal RNA small subunit methyltransferase G (228 aa).

Residues Gly-89, Leu-94, Val-140–Glu-141, and Arg-159 each bind S-adenosyl-L-methionine.

It belongs to the methyltransferase superfamily. RNA methyltransferase RsmG family.

The protein localises to the cytoplasm. The catalysed reaction is guanosine(527) in 16S rRNA + S-adenosyl-L-methionine = N(7)-methylguanosine(527) in 16S rRNA + S-adenosyl-L-homocysteine. Functionally, specifically methylates the N7 position of guanine in position 527 of 16S rRNA. The sequence is that of Ribosomal RNA small subunit methyltransferase G from Burkholderia ambifaria (strain ATCC BAA-244 / DSM 16087 / CCUG 44356 / LMG 19182 / AMMD) (Burkholderia cepacia (strain AMMD)).